The chain runs to 932 residues: DNA mismatch repair protein MutS (932 aa).

An ATP-binding site is contributed by 615–622 (GPNMAGKS).

The protein belongs to the DNA mismatch repair MutS family.

In terms of biological role, this protein is involved in the repair of mismatches in DNA. It is possible that it carries out the mismatch recognition step. This protein has a weak ATPase activity. The protein is DNA mismatch repair protein MutS of Clostridium botulinum (strain Langeland / NCTC 10281 / Type F).